The chain runs to 137 residues: Large ribosomal subunit protein uL16 (137 aa).

This sequence belongs to the universal ribosomal protein uL16 family. In terms of assembly, part of the 50S ribosomal subunit.

In terms of biological role, binds 23S rRNA and is also seen to make contacts with the A and possibly P site tRNAs. The polypeptide is Large ribosomal subunit protein uL16 (Roseobacter denitrificans (strain ATCC 33942 / OCh 114) (Erythrobacter sp. (strain OCh 114))).